A 106-amino-acid polypeptide reads, in one-letter code: Nucleoid-associated protein Nham_0463 (106 aa).

This sequence belongs to the YbaB/EbfC family. Homodimer.

It localises to the cytoplasm. The protein resides in the nucleoid. Its function is as follows. Binds to DNA and alters its conformation. May be involved in regulation of gene expression, nucleoid organization and DNA protection. This chain is Nucleoid-associated protein Nham_0463, found in Nitrobacter hamburgensis (strain DSM 10229 / NCIMB 13809 / X14).